The chain runs to 243 residues: MKSDKTPKINKFIRRLYKIVNDNSFSEIQWTTDGLRFYITDKTAFMLNGLKYLSKTTEYSAFVRLLYVYGFSKSKSLNAYEEEYYHKNFKRDGDNLLPCIQRTVETKTTLLQKNTNRTPNQLQDLLQYLNNQNFKLEGEIKSLKDRVDQQDCTINGLVQLLTRIFRTNDSNKDMLLPLNITEHGSPINNELRINYDKNQVARLMADTPNIDGRLENTNIELSNNKNFLFDSDDEDSIYKTNFF.

Residues isoleucine 9–arginine 102 mediate DNA binding. The segment at glutamine 121–isoleucine 164 is involved in trimerization.

The protein belongs to the HSF family. Homotrimer. Homotrimerization increases the affinity of HSF1 to DNA.

It localises to the nucleus. DNA-binding transcription factor that specifically binds heat shock promoter elements (HSE) and activates transcription. In Vairimorpha ceranae (strain BRL01) (Microsporidian parasite), this protein is Probable heat shock transcription factor.